A 61-amino-acid polypeptide reads, in one-letter code: Cytotoxin 2 (61 aa).

4 disulfides stabilise this stretch: Cys3-Cys22, Cys15-Cys39, Cys43-Cys54, and Cys55-Cys60.

This sequence belongs to the three-finger toxin family. Short-chain subfamily. Type IB cytotoxin sub-subfamily. In terms of tissue distribution, expressed by the venom gland.

The protein resides in the secreted. Its function is as follows. This protein lyses red blood cells, has cytotoxic activity and induces hypotension, but is not neurotoxic. In addition, it induces direct paralysis of the muscle fiber. This is Cytotoxin 2 from Hemachatus haemachatus (Rinkhals).